Here is an 858-residue protein sequence, read N- to C-terminus: Leucine--tRNA ligase (858 aa).

The short motif at 42–52 (PYPSGNLHMGH) is the 'HIGH' region element. Residues 584 to 594 (NPNRSDSSRYI) show a composition bias toward polar residues. Residues 584 to 611 (NPNRSDSSRYIPSNLVDPNDPKDPETGE) are disordered. The 'KMSKS' region signature appears at 619–623 (TMSKS). Lys622 provides a ligand contact to ATP.

The protein belongs to the class-I aminoacyl-tRNA synthetase family.

Its subcellular location is the cytoplasm. It catalyses the reaction tRNA(Leu) + L-leucine + ATP = L-leucyl-tRNA(Leu) + AMP + diphosphate. This chain is Leucine--tRNA ligase, found in Cyanothece sp. (strain PCC 7425 / ATCC 29141).